The sequence spans 894 residues: Nitrate reductase [NADPH] (894 aa).

Residues 1–79 (MAVKSQLGVT…PEDLKTPDHR (79 aa)) are disordered. Residues 7-16 (LGVTYTTKTF) show a composition bias toward polar residues. The span at 69–79 (LPEDLKTPDHR) shows a compositional bias: basic and acidic residues. Cys169 contacts Mo-molybdopterin. In terms of domain architecture, Cytochrome b5 heme-binding spans 535–610 (VRIISLEELK…MPQYHIGTLN (76 aa)). 2 residues coordinate heme: His570 and His593. In terms of domain architecture, FAD-binding FR-type spans 638-749 (KYWSKAILET…KGPVGKFEYL (112 aa)). FAD contacts are provided by residues 692–695 (RAYT), 709–713 (LIKIY), 723–725 (KMT), Ser773, and Thr776.

It belongs to the nitrate reductase family. Homodimer. The cofactor is FAD. Heme serves as cofactor. Mo-molybdopterin is required as a cofactor.

The enzyme catalyses nitrite + NADP(+) + H2O = nitrate + NADPH + H(+). Its function is as follows. Nitrate reductase is a key enzyme involved in the first step of nitrate assimilation in plants, fungi and bacteria. The polypeptide is Nitrate reductase [NADPH] (NIA) (Beauveria bassiana (White muscardine disease fungus)).